Consider the following 283-residue polypeptide: Bifunctional protein FolD (283 aa).

Residues 165-167, serine 190, and valine 231 each bind NADP(+); that span reads GRS.

It belongs to the tetrahydrofolate dehydrogenase/cyclohydrolase family. In terms of assembly, homodimer.

It carries out the reaction (6R)-5,10-methylene-5,6,7,8-tetrahydrofolate + NADP(+) = (6R)-5,10-methenyltetrahydrofolate + NADPH. The catalysed reaction is (6R)-5,10-methenyltetrahydrofolate + H2O = (6R)-10-formyltetrahydrofolate + H(+). Its pathway is one-carbon metabolism; tetrahydrofolate interconversion. Catalyzes the oxidation of 5,10-methylenetetrahydrofolate to 5,10-methenyltetrahydrofolate and then the hydrolysis of 5,10-methenyltetrahydrofolate to 10-formyltetrahydrofolate. The protein is Bifunctional protein FolD of Bacillus pumilus (strain SAFR-032).